The following is a 123-amino-acid chain: Large ribosomal subunit protein bL12 (123 aa).

The interval 98–123 is disordered; that stretch reads KEGVSKEEAEEIKSKLEDAGATVELK. Positions 100-115 are enriched in basic and acidic residues; it reads GVSKEEAEEIKSKLED.

This sequence belongs to the bacterial ribosomal protein bL12 family. As to quaternary structure, homodimer. Part of the ribosomal stalk of the 50S ribosomal subunit. Forms a multimeric L10(L12)X complex, where L10 forms an elongated spine to which 2 to 4 L12 dimers bind in a sequential fashion. Binds GTP-bound translation factors.

Functionally, forms part of the ribosomal stalk which helps the ribosome interact with GTP-bound translation factors. Is thus essential for accurate translation. This Halothermothrix orenii (strain H 168 / OCM 544 / DSM 9562) protein is Large ribosomal subunit protein bL12.